The following is a 238-amino-acid chain: Monocyte to macrophage differentiation factor (238 aa).

Topologically, residues 1 to 28 (MQFRNRFQRFMNHRAPANGRYKPTCYEH) are cytoplasmic. The chain crosses the membrane as a helical span at residues 29 to 49 (AANCYTHAFLIVPAIVGSALL). Over 50-61 (HRLSDDCWEKIT) the chain is Lumenal. A helical membrane pass occupies residues 62–82 (AWIYGMGLCALFIVSTVFHIV). The Cytoplasmic segment spans residues 83 to 101 (SWKKSHLRTVEHCFHMCDR). Residues 102–122 (MVIYFFIAASYAPWLNLRELG) form a helical membrane-spanning segment. P123 is a topological domain (lumenal). The helical transmembrane segment at 124-144 (LASHMRWFIWLMAAGGTIYVF) threads the bilayer. Over 145-151 (LYHEKYK) the chain is Cytoplasmic. A helical transmembrane segment spans residues 152 to 172 (VVELFFYLTMGFSPALVVTSM). Topologically, residues 173–174 (NN) are lumenal. Residues 175 to 195 (TDGLQELACGGLIYCLGVVFF) traverse the membrane as a helical segment. Residues 196–198 (KSD) are Cytoplasmic-facing. A helical transmembrane segment spans residues 199–219 (GIIPFAHAIWHLFVATAAAVH). Residues 220–238 (YYAIWKYLYRSPTDFIRHL) lie on the Lumenal side of the membrane.

It belongs to the ADIPOR family. As to expression, preferentially expressed in the brain.

The protein resides in the late endosome membrane. It is found in the lysosome membrane. Its function is as follows. Is involved in the dynamics of lysosomal membranes associated with microglial activation following brain lesion. This Rattus norvegicus (Rat) protein is Monocyte to macrophage differentiation factor.